The primary structure comprises 382 residues: Chaperone protein DnaJ (382 aa).

The region spanning 5 to 70 (DYYEVLGVSR…DKKAAYDRYG (66 aa)) is the J domain. Residues 141-219 (GVQKTINVPA…CHGAGRVEKE (79 aa)) form a CR-type zinc finger. Residues Cys-154, Cys-157, Cys-171, Cys-174, Cys-193, Cys-196, Cys-207, and Cys-210 each coordinate Zn(2+). CXXCXGXG motif repeat units follow at residues 154 to 161 (CDACKGTG), 171 to 178 (CPTCSGMG), 193 to 200 (CPTCNGMG), and 207 to 214 (CKVCHGAG).

The protein belongs to the DnaJ family. As to quaternary structure, homodimer. Zn(2+) serves as cofactor.

The protein localises to the cytoplasm. Participates actively in the response to hyperosmotic and heat shock by preventing the aggregation of stress-denatured proteins and by disaggregating proteins, also in an autonomous, DnaK-independent fashion. Unfolded proteins bind initially to DnaJ; upon interaction with the DnaJ-bound protein, DnaK hydrolyzes its bound ATP, resulting in the formation of a stable complex. GrpE releases ADP from DnaK; ATP binding to DnaK triggers the release of the substrate protein, thus completing the reaction cycle. Several rounds of ATP-dependent interactions between DnaJ, DnaK and GrpE are required for fully efficient folding. Also involved, together with DnaK and GrpE, in the DNA replication of plasmids through activation of initiation proteins. This is Chaperone protein DnaJ from Cereibacter sphaeroides (strain ATCC 17029 / ATH 2.4.9) (Rhodobacter sphaeroides).